The following is a 305-amino-acid chain: MLDTQIQELIIKWQKYLSLQKNYSNHTLISYNNDLKHFLEFMNYYNSDIVTMDYIKAADIRLMRSWLAKRKCDNFVTSSIARGLSAIKNFYKFLEKTAELHNHVVFSIKSPKKSKLLPKALSEEEVNISLDHIEEYGNSQWIEIRNKALLVLIYASGLRISEALSITKLHLQNLEFIKIMGKGSKERVIPWLAIARNLITEYLEKLPYELKDDEPIFRGKQGKKLQPPVFNRELIKLKRFYGLPEYLSAHSFRHSFASHLLENGADLRSIQELLGHKSLSTTQSYTKTSIKHLETAYVTAHPIKK.

One can recognise a Core-binding (CB) domain in the interval 4–95; the sequence is TQIQELIIKW…AIKNFYKFLE (92 aa). Residues 116–298 form the Tyr recombinase domain; sequence LLPKALSEEE…SIKHLETAYV (183 aa). Residues arginine 159, lysine 182, histidine 250, arginine 253, and histidine 276 contribute to the active site. Residue tyrosine 285 is the O-(3'-phospho-DNA)-tyrosine intermediate of the active site.

It belongs to the 'phage' integrase family. XerC subfamily. Forms a cyclic heterotetrameric complex composed of two molecules of XerC and two molecules of XerD.

It localises to the cytoplasm. Functionally, site-specific tyrosine recombinase, which acts by catalyzing the cutting and rejoining of the recombining DNA molecules. The XerC-XerD complex is essential to convert dimers of the bacterial chromosome into monomers to permit their segregation at cell division. It also contributes to the segregational stability of plasmids. The protein is Tyrosine recombinase XerC of Rickettsia bellii (strain RML369-C).